We begin with the raw amino-acid sequence, 131 residues long: Fumarate reductase subunit C (131 aa).

3 helical membrane passes run 30–50 (EGTA…LFAL), 57–77 (WAGF…LITL), and 109–129 (IIKS…FVAL).

It belongs to the FrdC family. Part of an enzyme complex containing four subunits: a flavoprotein (FrdA), an iron-sulfur protein (FrdB), and two hydrophobic anchor proteins (FrdC and FrdD).

The protein localises to the cell inner membrane. In terms of biological role, two distinct, membrane-bound, FAD-containing enzymes are responsible for the catalysis of fumarate and succinate interconversion; fumarate reductase is used in anaerobic growth, and succinate dehydrogenase is used in aerobic growth. Anchors the catalytic components of the fumarate reductase complex to the cell inner membrane, binds quinones. In Shigella flexneri, this protein is Fumarate reductase subunit C.